The following is a 568-amino-acid chain: MSVSVFNRCWSKVILETLVRQGVSHVCIAPGSRSTPLTLEAVRLQNAGSVTCYTHFDERGLGFFALGIAKATQSPVAIIVTSGTATANLYPAIIEARQTGVNLFVLTADRPPELWECGANQAILQQNMFGQYPVANVNLPKPKADYSAQWLISLLEQAAFQQKQQGGVVHINVPFSEPLYDATDEAVDSHSWLQPLQRWLIQTKPWMNVEAQQNEVLMHENWDHWRTKRGVVVVGQLPAEQAMGINSWASAMGWVLLTDIQSGVVPTTPYEDIWLANQTVREKLLQADIVIQFGARFISKRINQFLQAFKGEFWLVEQSGKALDPYHHSLTRFNAKAHHWLRAHPPLRQKPWLLEPLALSKFCATFIEQQVGGNLTEASFALRLPTLLPYNGVLFLGNSLLVRLVDALTQLPESYPVYTNRGASGIDGLLATAAGIGIGSNKPVVAVIGDTSTLYDLNSFALFKNVTQPTVIFVINNNGGAIFDMLPVDEQVKDQFYRLPHNGDFSQIAAMFDLKYAHPYTWADLNSVVKQAYSRRKATLIEIKTNPSDGSSLYKRLIEQISHAVIGA.

It belongs to the TPP enzyme family. MenD subfamily. As to quaternary structure, homodimer. Mg(2+) serves as cofactor. Mn(2+) is required as a cofactor. It depends on thiamine diphosphate as a cofactor.

The enzyme catalyses isochorismate + 2-oxoglutarate + H(+) = 5-enolpyruvoyl-6-hydroxy-2-succinyl-cyclohex-3-ene-1-carboxylate + CO2. It participates in quinol/quinone metabolism; 1,4-dihydroxy-2-naphthoate biosynthesis; 1,4-dihydroxy-2-naphthoate from chorismate: step 2/7. The protein operates within quinol/quinone metabolism; menaquinone biosynthesis. Its function is as follows. Catalyzes the thiamine diphosphate-dependent decarboxylation of 2-oxoglutarate and the subsequent addition of the resulting succinic semialdehyde-thiamine pyrophosphate anion to isochorismate to yield 2-succinyl-5-enolpyruvyl-6-hydroxy-3-cyclohexene-1-carboxylate (SEPHCHC). This Haemophilus influenzae (strain PittEE) protein is 2-succinyl-5-enolpyruvyl-6-hydroxy-3-cyclohexene-1-carboxylate synthase.